We begin with the raw amino-acid sequence, 200 residues long: Recombination protein RecR (200 aa).

A C4-type zinc finger spans residues 58-73 (CSLCCNLTDEDPCSIC). Residues 81 to 176 (NLLCVVEEPR…KVTRIAHGIP (96 aa)) form the Toprim domain.

This sequence belongs to the RecR family.

May play a role in DNA repair. It seems to be involved in an RecBC-independent recombinational process of DNA repair. It may act with RecF and RecO. The sequence is that of Recombination protein RecR from Desulforamulus reducens (strain ATCC BAA-1160 / DSM 100696 / MI-1) (Desulfotomaculum reducens).